Reading from the N-terminus, the 987-residue chain is ATP-dependent 6-phosphofructokinase subunit alpha (987 aa).

An N-terminal catalytic PFK domain 1 region spans residues 1 to 602; that stretch reads MPSSSDAINR…DYRYFRDISI (602 aa). ATP contacts are provided by residues Gly-237, 300–301, and 330–333; these read RC and GDGS. Asp-331 serves as a coordination point for Mg(2+). Residues 376-378, Arg-413, 420-422, Glu-477, Arg-504, and 510-513 each bind beta-D-fructose 6-phosphate; these read SID, MGR, and HVQR. Catalysis depends on Asp-378, which acts as the Proton acceptor. Positions 603 to 616 are interdomain linker; that stretch reads YDDGSKQLSEDKRL. The C-terminal regulatory PFK domain 2 stretch occupies residues 617–987; that stretch reads NIAIVHVGAA…KSLLKKQERY (371 aa). Residues Arg-686, 743–747, Arg-781, 788–790, Glu-848, Arg-874, 880–883, and Arg-958 each bind beta-D-fructose 2,6-bisphosphate; these read TVSNN, QGG, and HVQQ.

It belongs to the phosphofructokinase type A (PFKA) family. ATP-dependent PFK group I subfamily. Eukaryotic two domain clade 'E' sub-subfamily. As to quaternary structure, heterooctamer of 4 alpha and 4 beta chains. It depends on Mg(2+) as a cofactor.

Its subcellular location is the cytoplasm. It catalyses the reaction beta-D-fructose 6-phosphate + ATP = beta-D-fructose 1,6-bisphosphate + ADP + H(+). It participates in carbohydrate degradation; glycolysis; D-glyceraldehyde 3-phosphate and glycerone phosphate from D-glucose: step 3/4. Its activity is regulated as follows. Allosterically activated by ADP, AMP, or fructose 2,6-bisphosphate, and allosterically inhibited by ATP or citrate. In terms of biological role, catalyzes the phosphorylation of D-fructose 6-phosphate to fructose 1,6-bisphosphate by ATP, the first committing step of glycolysis. This chain is ATP-dependent 6-phosphofructokinase subunit alpha (PFK1), found in Candida albicans (Yeast).